Here is a 538-residue protein sequence, read N- to C-terminus: Ribosome-associated complex subunit SSZ1 (538 aa).

Residues 400 to 538 are peptide-binding domain; it reads PVIVNTPHLK…KTGNAVKGEL (139 aa). The segment at 464 to 484 is disordered; the sequence is PIPKEENAEEDDESEWSDDEP. Acidic residues predominate over residues 470–484; the sequence is NAEEDDESEWSDDEP. A phosphoserine mark is found at Ser477 and Ser480.

The protein belongs to the heat shock protein 70 family. In terms of assembly, RAC is a heterodimer of the Hsp70/DnaK-type chaperone SSZ1 and the Hsp40/DnaJ-type chaperone ZUO1. RAC associates with ribosomes via ZUO1.

It localises to the cytoplasm. Its function is as follows. Component of the ribosome-associated complex (RAC), a heterodimeric chaperone complex involved in regulation of accurate translation termination and in folding or maintaining nascent polypeptides in a folding-competent state. RAC stimulates the ATPase activity of the ribosome-associated pool of Hsp70-type chaperones SSB1/SSB2 that bind to the nascent polypeptide chain. SSZ1 is required for ZUO1 to function efficiently as a J-protein for SSB1/SSB2. Also involved in pleiotropic drug resistance by post-translational activation of transcription factor PDR1. The polypeptide is Ribosome-associated complex subunit SSZ1 (SSZ1) (Saccharomyces cerevisiae (strain ATCC 204508 / S288c) (Baker's yeast)).